The sequence spans 152 residues: MLQLHTIKPNPGAKHRKKRLGNGESSGLGKTCGKGNKGQKARSGGTIRPGFEGGQMPLHRRLPKKGFNNTRFQDKILIVNLSQLERVFEAGATVDENTLRAAKLVQGPCDAVKLLGNGTLTKNLNVVVDFVSASAREKVTQAGGTVTVLSEA.

A disordered region spans residues 1–66; that stretch reads MLQLHTIKPN…PLHRRLPKKG (66 aa). Over residues 24–36 the composition is skewed to gly residues; that stretch reads ESSGLGKTCGKGN.

It belongs to the universal ribosomal protein uL15 family. In terms of assembly, part of the 50S ribosomal subunit.

Its function is as follows. Binds to the 23S rRNA. The polypeptide is Large ribosomal subunit protein uL15 (Akkermansia muciniphila (strain ATCC BAA-835 / DSM 22959 / JCM 33894 / BCRC 81048 / CCUG 64013 / CIP 107961 / Muc)).